Here is a 652-residue protein sequence, read N- to C-terminus: Regulator of DNA class I crossover intermediates 1 (652 aa).

Positions 1–228 (MNWVGGSRSR…APYKRTNSSE (228 aa)) form a DNA-binding region, binds DNA containing a D-loop. Disordered regions lie at residues 464–512 (YLES…KATE) and 621–652 (EKESSHPEAGSCTEDRTADTTGGQETPTSNSL). The span at 467–477 (SSQSSQSASYS) shows a compositional bias: low complexity. 2 stretches are compositionally biased toward polar residues: residues 478–491 (PRPTESTFSSSTDL) and 639–652 (DTTGGQETPTSNSL).

As to quaternary structure, interacts with MSH5. Interacts with TEX11. In terms of tissue distribution, expressed mainly in testis (at protein level). Expressed in spermatogonia and enriched in spermatocytes; absent in testicular somatic cells (at protein level). No expression or low levels in other tissues.

It is found in the chromosome. In terms of biological role, involved in recombination, probably acting by stabilizing recombination intermediates during meiotic crossover formation. Required for normal germline development and fertility. Required for meiotic progression, complete chromosomal synapsis and crossover formation. Binds double-stranded DNA. However, also binds branched DNA molecules, such as those containing a D-loop or Holliday junction structure. Probably not required for formation of DNA double-strand breaks (DSBs). Also binds RNA in an RNA structure-independent manner, with a preference for binding 3'-UTR regions of mRNAs; may stabilize bound RNAs. The polypeptide is Regulator of DNA class I crossover intermediates 1 (Mus musculus (Mouse)).